Reading from the N-terminus, the 50-residue chain is Large ribosomal subunit protein bL33 (50 aa).

Belongs to the bacterial ribosomal protein bL33 family.

The polypeptide is Large ribosomal subunit protein bL33 (Endomicrobium trichonymphae).